The chain runs to 818 residues: Fibrous sheath CABYR-binding protein (818 aa).

The interval methionine 1–isoleucine 61 is disordered. Phosphoserine is present on residues serine 25, serine 57, and serine 182. 2 disordered regions span residues serine 195 to threonine 727 and leucine 773 to valine 805. Composition is skewed to low complexity over residues serine 490 to glutamate 511, glutamate 544 to glutamate 560, and alanine 697 to glutamate 715. A compositionally biased stretch (basic and acidic residues) spans leucine 773–proline 794.

In terms of assembly, interacts with CABYR. Interacts with ROPN1 and ROPN1L; the interaction increases upon spermatozoa capacitation conditions. Phosphorylated by PKA upon spermatozoa capacitation conditions.

The protein localises to the cell projection. Its subcellular location is the cilium. The protein resides in the flagellum. Functionally, may be involved in the later stages of fibrous sheath biogenesis and spermatozoa capacitation. Inhibits ROPN1 and ROPN1L SUMOylation. Binds calcium. The sequence is that of Fibrous sheath CABYR-binding protein from Bos taurus (Bovine).